The chain runs to 420 residues: Phosphoglycerate kinase (420 aa).

(2R)-3-phosphoglycerate-binding residues include Val24, Asp25, Phe26, Asn27, Arg40, Ser63, His64, Gly66, Arg67, Leu122, Arg123, His170, and Arg171. Gly214 contacts ADP. Position 214 (Gly214) interacts with CDP. 2 residues coordinate AMP: Ala215 and Lys216. Ala215 contacts ATP. Residue Ala215 participates in Mg(2+) binding. Asp219 contributes to the CDP binding site. Position 219 (Asp219) interacts with Mg(2+). Lys220 serves as a coordination point for AMP. Residue Lys220 participates in ATP binding. Residue Gly238 participates in ADP binding. Gly238 is a binding site for CDP. Gly239 and Gly313 together coordinate AMP. ATP contacts are provided by Gly239 and Gly313. CDP-binding residues include Gly338 and Phe343. Residue Phe343 participates in ADP binding. Glu344 provides a ligand contact to AMP. 3 residues coordinate ATP: Glu344, Asp375, and Thr376. Asp375 contacts Mg(2+).

This sequence belongs to the phosphoglycerate kinase family. Monomer. Mg(2+) serves as cofactor.

The catalysed reaction is (2R)-3-phosphoglycerate + ATP = (2R)-3-phospho-glyceroyl phosphate + ADP. It functions in the pathway carbohydrate degradation; glycolysis; pyruvate from D-glyceraldehyde 3-phosphate: step 2/5. This is Phosphoglycerate kinase (PGK) from Tetrahymena thermophila.